A 73-amino-acid polypeptide reads, in one-letter code: Large ribosomal subunit protein bL31 (73 aa).

The protein belongs to the bacterial ribosomal protein bL31 family. Type A subfamily. As to quaternary structure, part of the 50S ribosomal subunit.

Its function is as follows. Binds the 23S rRNA. This chain is Large ribosomal subunit protein bL31, found in Rhizobium meliloti (strain 1021) (Ensifer meliloti).